An 83-amino-acid polypeptide reads, in one-letter code: Cytochrome b559 subunit alpha (83 aa).

The chain crosses the membrane as a helical span at residues 21–35; that stretch reads VIHSITIPSLFIAGW. His-23 is a heme binding site.

Belongs to the PsbE/PsbF family. In terms of assembly, heterodimer of an alpha subunit and a beta subunit. PSII is composed of 1 copy each of membrane proteins PsbA, PsbB, PsbC, PsbD, PsbE, PsbF, PsbH, PsbI, PsbJ, PsbK, PsbL, PsbM, PsbT, PsbX, PsbY, PsbZ, Psb30/Ycf12, at least 3 peripheral proteins of the oxygen-evolving complex and a large number of cofactors. It forms dimeric complexes. Heme b serves as cofactor.

It localises to the plastid. The protein resides in the chloroplast thylakoid membrane. In terms of biological role, this b-type cytochrome is tightly associated with the reaction center of photosystem II (PSII). PSII is a light-driven water:plastoquinone oxidoreductase that uses light energy to abstract electrons from H(2)O, generating O(2) and a proton gradient subsequently used for ATP formation. It consists of a core antenna complex that captures photons, and an electron transfer chain that converts photonic excitation into a charge separation. This chain is Cytochrome b559 subunit alpha, found in Huperzia lucidula (Shining clubmoss).